Reading from the N-terminus, the 100-residue chain is uncharacterized protein (100 aa).

3 consecutive transmembrane segments (helical) span residues 9–29, 41–61, and 72–92; these read VYTY…SWVV, PYLI…ITAP, and SIPF…FLGI.

The protein localises to the membrane. This is an uncharacterized protein from Saccharomyces cerevisiae (strain ATCC 204508 / S288c) (Baker's yeast).